A 193-amino-acid polypeptide reads, in one-letter code: Acyl carrier protein phosphodiesterase (193 aa).

It belongs to the AcpH family.

It carries out the reaction holo-[ACP] + H2O = apo-[ACP] + (R)-4'-phosphopantetheine + H(+). In terms of biological role, converts holo-ACP to apo-ACP by hydrolytic cleavage of the phosphopantetheine prosthetic group from ACP. This chain is Acyl carrier protein phosphodiesterase, found in Shigella boydii serotype 4 (strain Sb227).